Here is a 491-residue protein sequence, read N- to C-terminus: MAMRHLSRSRDVTKRSTKKYIEEPLYNRLFKDGGTEVKVRQQLNQFLKGTKHVFKWEVGDTIKKLRNRGLYYPALKLSEVMEERGMNKTVSDQAIHLDLVAKAREITAGENYFVDLPETSKTELTYGSLLNCYCKELLTEKAEGLLNKMKELNITPSSMSYNSLMTLYTKTGETEKVPAMIQELKAENVMPDSYTYNVWMRALAATNDISGVERVIEEMNRDGRVAPDWTTYSNMASIYVDAGLSQKAEKALQELEMKNTQRDFTAYQFLITLYGRLGKLTEVYRIWRSLRLAIPKTSNVAYLNMIQVLVKLNDLPGAETLFKEWQANCSTYDIRIVNVLIGAYAQEGLIQKANELKEKAPRRGGKLNAKTWEIFMDYYVKSGDMARALECMSKAVSIGKGDGGKWLPSPETVRALMSYFEQKKDVNGAENLLEILKNGTDNIGAEIFEPLIRTYAAAGKSHPAMRRRLKMENVEVNEATKKLLDEVSQDV.

8 PPR repeats span residues 122 to 156, 157 to 191, 192 to 226, 228 to 262, 263 to 293, 298 to 328, 333 to 367, and 368 to 402; these read TELT…NITP, SSMS…NVMP, DSYT…GRVA, DWTT…NTQR, DFTA…LRLA, SNVA…WQAN, DIRI…GGKL, and NAKT…GKGD.

This sequence belongs to the PPR family. P subfamily. In terms of assembly, component of the mitochondrial ribosome large subunit.

The protein localises to the mitochondrion. This chain is Large ribosomal subunit protein mL101 (rPPR4), found in Arabidopsis thaliana (Mouse-ear cress).